Consider the following 256-residue polypeptide: Gamma carbonic anhydrase-like 2, mitochondrial (256 aa).

A mitochondrion-targeting transit peptide spans 1 to 33; sequence MATSLARISKRSITSAVSSNLIRRYFAAEAVAV. Substrate is bound by residues 103 to 105 and 118 to 119; these read RGD and QE. Histidine 124 is a binding site for Zn(2+). Substrate is bound by residues arginine 152, glutamine 164, and tyrosine 231.

The protein belongs to the gamma-class carbonic anhydrase family. In terms of assembly, component of the mitochondrial oxidoreductase respiratory chain complex I; element of the extra matrix-exposed domain, which is attached to the membrane arm of this complex. Interacts with GAMMACA2.

It is found in the mitochondrion membrane. In terms of biological role, involved in complex I assembly in mitochondria and respiration. This Arabidopsis thaliana (Mouse-ear cress) protein is Gamma carbonic anhydrase-like 2, mitochondrial (GAMMACAL2).